The sequence spans 269 residues: MHVNGKVALVTGAAQGIGKAFAEALLLHGAKVALVDWNLEAGVKCKAALDEQFEPQKTLFVQCDVADQKQLRDTFRKVVDHFGRLDILVNNAGVNNEKNWEQTLQINLVSVISGTYLGLDYMSKQNGGEGGIIINMSSLAGLMPVAQQPVYCASKHGIIGFTRSAAMAANLMKSGVRLNVICPGFVDTPILESIEKEENMGQYIEYKDQIKAMMKFYGVLHPSTIANGLINLIEDDALNGAIMKITASKGIHFQDYDISPLLVKAPLTS.

NAD(+)-binding positions include 12–20 (GAAQGIGKA), 36–37 (DW), 63–65 (CDV), and asparagine 91. Residues serine 138 and glutamine 148 each contribute to the substrate site. The active-site Proton acceptor is tyrosine 151. NAD(+)-binding positions include 151–155 (YCASK) and 186–188 (VDT).

Belongs to the short-chain dehydrogenases/reductases (SDR) family. In terms of assembly, homodimer. In terms of tissue distribution, expressed in proximal convoluted tubules of the kidney, where it colocalizes with the prostaglandin transporter SLC22A22 (at protein level). Expressed in lung, intestine, stomach and liver.

It is found in the cytoplasm. The catalysed reaction is prostaglandin E2 + NAD(+) = 15-oxoprostaglandin E2 + NADH + H(+). It carries out the reaction (15S)-hydroxy-(5Z,8Z,11Z,13E)-eicosatetraenoate + NAD(+) = 15-oxo-(5Z,8Z,11Z,13E)-eicosatetraenoate + NADH + H(+). The enzyme catalyses (11R)-hydroxy-(5Z,8Z,12E,14Z)-eicosatetraenoate + NAD(+) = 11-oxo-(5Z,8Z,12E,14Z)-eicosatetraenoate + NADH + H(+). It catalyses the reaction lipoxin A4 + NAD(+) = 15-oxo-(5S,6R)-dihydroxy-(7E,9E,11Z,13E)-eicosatetraenoate + NADH + H(+). The catalysed reaction is 15-oxo-(5S,6R)-dihydroxy-(7E,9E,11Z)-eicosatrienoate + NADH + H(+) = (5S,6R,15S)-trihydroxy-(7E,9E,11Z)-eicosatrienoate + NAD(+). It carries out the reaction prostaglandin A1 + NAD(+) = 15-oxo-prostaglandin A1 + NADH + H(+). The enzyme catalyses prostaglandin E1 + NAD(+) = 15-oxoprostaglandin E1 + NADH + H(+). It catalyses the reaction 14-hydroxy-(4Z,7Z,10Z,12E,16Z,19Z)-docosahexaenoate + NAD(+) = 14-oxo-(4Z,7Z,10Z,12E,16Z,19Z)-docosahexaenoate + NADH + H(+). The catalysed reaction is resolvin E1 + NAD(+) = 18-oxo-resolvin E1 + NADH + H(+). It carries out the reaction resolvin D1 + NAD(+) = 8-oxoresolvin D1 + NADH + H(+). The enzyme catalyses resolvin D1 + NAD(+) = 17-oxoresolvin D1 + NADH + H(+). It catalyses the reaction resolvin D2 + NAD(+) = 7-oxoresolvin D2 + NADH + H(+). The catalysed reaction is resolvin D2 + NAD(+) = 16-oxoresolvin D2 + NADH + H(+). In terms of biological role, catalyzes the NAD-dependent dehydrogenation (oxidation) of a broad array of hydroxylated polyunsaturated fatty acids (mainly eicosanoids and docosanoids, including prostaglandins, lipoxins and resolvins), yielding their corresponding keto (oxo) metabolites. Decreases the levels of the pro-proliferative prostaglandins such as prostaglandin E2 (whose activity is increased in cancer because of an increase in the expression of cyclooxygenase 2) and generates oxo-fatty acid products that can profoundly influence cell function by abrogating pro-inflammatory cytokine expression. Converts resolvins E1, D1 and D2 to their oxo products, which represents a mode of resolvin inactivation. Resolvin E1 plays important roles during the resolution phase of acute inflammation, while resolvins D1 and D2 have a unique role in obesity-induced adipose inflammation. This chain is 15-hydroxyprostaglandin dehydrogenase [NAD(+)] (Hpgd), found in Mus musculus (Mouse).